Consider the following 122-residue polypeptide: Nuclear transport factor 2A (122 aa).

An N-acetylmethionine modification is found at Met-1. The NTF2 domain maps to 6–119 (VAKAFVEHYY…YYVFNDIFRL (114 aa)).

As to quaternary structure, interacts with RAN1. In terms of tissue distribution, expressed in roots, stems, leaves and flowers, and, at low levels, in siliques.

It localises to the cytoplasm. The protein resides in the nucleus. The protein localises to the nucleus envelope. Facilitates protein transport into the nucleus. Interacts with various nucleoporins and with Ran-GDP. Could be part of a multicomponent system of cytosolic factors that assemble at the pore complex during nuclear import. The sequence is that of Nuclear transport factor 2A from Arabidopsis thaliana (Mouse-ear cress).